Consider the following 406-residue polypeptide: ATP synthase subunit a (406 aa).

Composition is skewed to low complexity over residues 22–31 and 43–59; these read AGEHGAPAPE and DAAG…AEHG. The interval 22–76 is disordered; the sequence is AGEHGAPAPEVATPAEGHGARDAAGAATDPHGAAAEHGAAAHEDPAQHGAAGAEA. 6 consecutive transmembrane segments (helical) span residues 151–171, 209–229, 232–252, 278–298, 304–324, and 351–371; these read KHVV…FAAV, FVPY…FGLV, AATA…TFLI, LWPL…TKPF, LFAN…LIFA, and VQAY…VAHH. The interval 375–406 is disordered; the sequence is DEHEEHGHGAAATGGAHGSHGSHVAGASPGHG. Low complexity predominate over residues 383–406; the sequence is GAAATGGAHGSHGSHVAGASPGHG.

It belongs to the ATPase A chain family. As to quaternary structure, F-type ATPases have 2 components, CF(1) - the catalytic core - and CF(0) - the membrane proton channel. CF(1) has five subunits: alpha(3), beta(3), gamma(1), delta(1), epsilon(1). CF(0) has three main subunits: a(1), b(2) and c(9-12). The alpha and beta chains form an alternating ring which encloses part of the gamma chain. CF(1) is attached to CF(0) by a central stalk formed by the gamma and epsilon chains, while a peripheral stalk is formed by the delta and b chains.

It localises to the cell inner membrane. In terms of biological role, key component of the proton channel; it plays a direct role in the translocation of protons across the membrane. The polypeptide is ATP synthase subunit a (Anaeromyxobacter sp. (strain Fw109-5)).